Reading from the N-terminus, the 390-residue chain is MWGQTNMVDKKSPLIAVSVGEASGDLLGAHLIRAIRKRCPQARLTGIGGELMKAEGFESLYDQERLAVRGFVEVVRRLPEILRIRRELVRDLLSLKPDVFVGIDAPDFNLGVAEKLKRAGIPTLHYVSPSVWAWRRERVGKIVHQVNRVLCLFPMEPQLYLDAGGRAEFVGHPMAQLMPLEDDRETARKTLGADVGIPVFALLPGSRVSEIDYMAPVFFQTALLLLERYPAARFLLPAATEATKRRLAEVLQRPEFAGLALTVTDRQSETVCRAADAVLVTSGTATLEVALCKRPMVISYKISPLTYAYVKRKIKVPHVGLPNILLGKEAVPELLQSEAKPEKLAAALADWYEHPDKVAALQQDFGALHLLLKKDTADLAARAVLEEAGC.

This sequence belongs to the LpxB family.

It carries out the reaction a lipid X + a UDP-2-N,3-O-bis[(3R)-3-hydroxyacyl]-alpha-D-glucosamine = a lipid A disaccharide + UDP + H(+). The protein operates within bacterial outer membrane biogenesis; LPS lipid A biosynthesis. In terms of biological role, condensation of UDP-2,3-diacylglucosamine and 2,3-diacylglucosamine-1-phosphate to form lipid A disaccharide, a precursor of lipid A, a phosphorylated glycolipid that anchors the lipopolysaccharide to the outer membrane of the cell. The chain is Lipid-A-disaccharide synthase from Neisseria gonorrhoeae (strain ATCC 700825 / FA 1090).